Consider the following 1609-residue polypeptide: Factor-induced gene 2 protein (1609 aa).

The signal sequence occupies residues 1–22 (MNSFASLGLIYSVVNLLTRVEA). An N-linked (GlcNAc...) asparagine glycan is attached at Asn29. Disordered regions lie at residues 129 to 165 (SSTLSSTAQPHRTSHSSSSFELPVTAPSSSSLPSSTS), 196 to 243 (SSEI…EPLS), and 266 to 312 (TIPT…NYDV). Positions 137 to 148 (QPHRTSHSSSSF) are enriched in polar residues. Residues 150–165 (LPVTAPSSSSLPSSTS) show a composition bias toward low complexity. The segment covering 196–212 (SSEISGSTSPKSLESFD) has biased composition (polar residues). Low complexity-rich tracts occupy residues 213 to 243 (TTGTITSSYSPSPSSKNSNQTSLLSPLEPLS) and 274 to 285 (TSSLPPTLRSSS). N-linked (GlcNAc...) asparagine glycosylation is present at Asn231. Positions 286 to 312 (MAPTSGSDSISHNFTSPPSKTSGNYDV) are enriched in polar residues. Residues Asn298, Asn347, Asn386, Asn426, Asn495, Asn535, Asn661, Asn674, and Asn713 are each glycosylated (N-linked (GlcNAc...) asparagine). The segment at 846-876 (ATSEATSTSTQVSATSATATASESSTTSQVS) is disordered. N-linked (GlcNAc...) asparagine glycosylation is found at Asn889, Asn907, and Asn1079. Over residues 1231–1243 (CTQDVPTQSSSPA) the composition is skewed to polar residues. The interval 1231 to 1259 (CTQDVPTQSSSPASTLAYSPSVSTSSSSS) is disordered. Positions 1244–1259 (STLAYSPSVSTSSSSS) are enriched in low complexity. N-linked (GlcNAc...) asparagine glycosylation occurs at Asn1400. The GPI-anchor amidated glycine moiety is linked to residue Gly1588. The propeptide at 1589 to 1609 (SASKFLCSKFFMIMVMVINFI) is removed in mature form.

Post-translationally, N-glycosylated.

The protein resides in the secreted. The protein localises to the cell wall. It is found in the membrane. Functionally, required for efficient mating. Plays a role in maintenance of cell wall integrity during mating. Important for mating cell projection shape and conjugation bridge diameter. Plays a role in cell fusion and nuclear migration. The protein is Factor-induced gene 2 protein (FIG2) of Saccharomyces cerevisiae (strain ATCC 204508 / S288c) (Baker's yeast).